The chain runs to 379 residues: 3-dehydroquinate synthase (379 aa).

NAD(+)-binding positions include 67 to 72 (SGEKNK), 101 to 105 (GVVLD), 125 to 126 (TT), Lys-138, and Lys-147. Zn(2+)-binding residues include Glu-180, His-242, and His-258.

It belongs to the sugar phosphate cyclases superfamily. Dehydroquinate synthase family. NAD(+) is required as a cofactor. It depends on Co(2+) as a cofactor. Requires Zn(2+) as cofactor.

Its subcellular location is the cytoplasm. It catalyses the reaction 7-phospho-2-dehydro-3-deoxy-D-arabino-heptonate = 3-dehydroquinate + phosphate. It functions in the pathway metabolic intermediate biosynthesis; chorismate biosynthesis; chorismate from D-erythrose 4-phosphate and phosphoenolpyruvate: step 2/7. Functionally, catalyzes the conversion of 3-deoxy-D-arabino-heptulosonate 7-phosphate (DAHP) to dehydroquinate (DHQ). This Chlamydia abortus (strain DSM 27085 / S26/3) (Chlamydophila abortus) protein is 3-dehydroquinate synthase.